The following is a 152-amino-acid chain: SsrA-binding protein (152 aa).

Belongs to the SmpB family.

The protein resides in the cytoplasm. Its function is as follows. Required for rescue of stalled ribosomes mediated by trans-translation. Binds to transfer-messenger RNA (tmRNA), required for stable association of tmRNA with ribosomes. tmRNA and SmpB together mimic tRNA shape, replacing the anticodon stem-loop with SmpB. tmRNA is encoded by the ssrA gene; the 2 termini fold to resemble tRNA(Ala) and it encodes a 'tag peptide', a short internal open reading frame. During trans-translation Ala-aminoacylated tmRNA acts like a tRNA, entering the A-site of stalled ribosomes, displacing the stalled mRNA. The ribosome then switches to translate the ORF on the tmRNA; the nascent peptide is terminated with the 'tag peptide' encoded by the tmRNA and targeted for degradation. The ribosome is freed to recommence translation, which seems to be the essential function of trans-translation. The polypeptide is SsrA-binding protein (Rickettsia africae (strain ESF-5)).